The sequence spans 199 residues: Recombination protein RecR (199 aa).

The C4-type zinc-finger motif lies at 57-72; it reads CQSCRTFTEETYCPIC. The region spanning 81–176 is the Toprim domain; that stretch reads SVICVVETPA…AVSRIAHGVP (96 aa).

This sequence belongs to the RecR family.

Its function is as follows. May play a role in DNA repair. It seems to be involved in an RecBC-independent recombinational process of DNA repair. It may act with RecF and RecO. This Shewanella piezotolerans (strain WP3 / JCM 13877) protein is Recombination protein RecR.